We begin with the raw amino-acid sequence, 1212 residues long: Nucleolar protein 6 (1212 aa).

2 disordered regions span residues 1 to 72 and 1156 to 1212; these read MGKI…PVSI and KREQ…KSLS. Over residues 1197–1212 the composition is skewed to basic residues; that stretch reads LKRKSLIKSRPLKSLS.

Belongs to the NRAP family. Part of the small subunit (SSU) processome, composed of more than 70 proteins and the RNA chaperone small nucleolar RNA (snoRNA) U3.

Its subcellular location is the nucleus. It localises to the nucleolus. The protein resides in the chromosome. Functionally, part of the small subunit (SSU) processome, first precursor of the small eukaryotic ribosomal subunit. During the assembly of the SSU processome in the nucleolus, many ribosome biogenesis factors, an RNA chaperone and ribosomal proteins associate with the nascent pre-rRNA and work in concert to generate RNA folding, modifications, rearrangements and cleavage as well as targeted degradation of pre-ribosomal RNA by the RNA exosome. This is Nucleolar protein 6 from Drosophila persimilis (Fruit fly).